Consider the following 241-residue polypeptide: Carboxy-S-adenosyl-L-methionine synthase (241 aa).

Residues tyrosine 38, 63–65, 88–89, 116–117, asparagine 131, and arginine 198 contribute to the S-adenosyl-L-methionine site; these read GCS, DN, and DI.

Belongs to the class I-like SAM-binding methyltransferase superfamily. Cx-SAM synthase family. As to quaternary structure, homodimer.

The catalysed reaction is prephenate + S-adenosyl-L-methionine = carboxy-S-adenosyl-L-methionine + 3-phenylpyruvate + H2O. Its function is as follows. Catalyzes the conversion of S-adenosyl-L-methionine (SAM) to carboxy-S-adenosyl-L-methionine (Cx-SAM). In Mannheimia succiniciproducens (strain KCTC 0769BP / MBEL55E), this protein is Carboxy-S-adenosyl-L-methionine synthase.